We begin with the raw amino-acid sequence, 558 residues long: INCREASED PETAL GROWTH ANISOTROPY 1-like protein 2 (558 aa).

Residues 1-15 are compositionally biased toward low complexity; that stretch reads MSRISTTSTTPSRVR. The interval 1-54 is disordered; that stretch reads MSRISTTSTTPSRVRAANSHYSVISKPRAQDDNGLTGGKPKSSGYDVKNDPAKR. A coiled-coil region spans residues 104–180; sequence VMATAAAEDE…EAKISSLSSN (77 aa). Residues 207–285 are disordered; that stretch reads KVKKEVAVES…AARAQKSPPV (79 aa). Composition is skewed to pro residues over residues 221 to 236 and 256 to 272; these read PPSP…PPLP and FAPP…PPRP. Positions 392-448 form a coiled coil; it reads KADTLQEAAVEYRELKKLEKELSSYSDDPNIHYGVALKKMANLLDKSEQRIRRLVRL.

It belongs to the IPGA1 family.

It localises to the cytoplasm. The protein localises to the cytoskeleton. Functionally, microtubule-associated protein probably involved in the regulation of microtubule organization. The sequence is that of INCREASED PETAL GROWTH ANISOTROPY 1-like protein 2 from Arabidopsis thaliana (Mouse-ear cress).